We begin with the raw amino-acid sequence, 523 residues long: Protein tweety homolog 3 (523 aa).

Over 1-42 (MAGVSYAAPWWVSLLHRLPHFDLSWEATSSQFRPEDTDYQQA) the chain is Extracellular. The chain crosses the membrane as a helical span at residues 43–63 (LLLLGAAALACLALDLLFLLF). The Cytoplasmic portion of the chain corresponds to 64–86 (YSFWLCCRRRKSEEHLDADCCCT). The chain crosses the membrane as a helical span at residues 87-107 (AWCVIIATLVCSAGIAVGFYG). Residues 108-211 (NGETSDGIHR…VDLYDWYRWL (104 aa)) are Extracellular-facing. Residues E110 and D113 each contribute to the Ca(2+) site. N-linked (GlcNAc...) asparagine glycans are attached at residues N126 and N144. The helical transmembrane segment at 212–232 (GYLGLLLLDVIICLLVLVGLI) threads the bilayer. Over 233 to 236 (RSSK) the chain is Cytoplasmic. The helical transmembrane segment at 237-257 (GILVGVCLLGVLALVISWGAL) threads the bilayer. Topologically, residues 258–386 (GLELAVSVGS…LTGFCYDGVE (129 aa)) are extracellular. 2 disulfides stabilise this stretch: C271–C381 and C299–C366. A glycan (N-linked (GlcNAc...) asparagine) is linked at N351. Residues 387-407 (GLIYLALFSFVTALMFSSIVC) form a helical membrane-spanning segment. Residues 408–523 (SVPHTWQQKR…QPRPDSSGSH (116 aa)) are Cytoplasmic-facing. 2 disordered regions span residues 413–435 (WQQK…RQAH) and 482–523 (QNPR…SGSH). S496 bears the Phosphoserine mark. A PY-motif; mediates interaction with NEDD4L motif is present at residues 498-501 (PPSY). A compositionally biased stretch (polar residues) spans 501-523 (YTSSMRAKYLATSQPRPDSSGSH). Residues S504 and S522 each carry the phosphoserine modification.

Belongs to the tweety family. In terms of assembly, homotetramer; disulfide-linked. Homodimer. Interacts with NEDD4L. In terms of processing, ubiquitinated by NEDD4L. N-Glycosylated. Contains high-mannose, hybrid and complex oligosaccharides. As to expression, expressed in excitable tissues. Expressed in the brain, heart, skeletal muscle, colon, spleen, kidney and peripheral blood leukocytes.

It is found in the cell membrane. It carries out the reaction chloride(in) = chloride(out). The catalysed reaction is L-glutamate(out) = L-glutamate(in). Calcium-independent, swelling-dependent volume-regulated anion channel (VRAC-swell) which plays a pivotal role in the process of regulatory volume decrease (RVD) in the brain through the efflux of anions like chloride and organic osmolytes like glutamate. Probable large-conductance Ca(2+)-activated chloride channel. The polypeptide is Protein tweety homolog 3 (TTYH3) (Homo sapiens (Human)).